The primary structure comprises 607 residues: Discoidin-inducing complex subunit B (607 aa).

The N-terminal stretch at 1–19 (MNKKIIILIYLIFIKSIVG) is a signal peptide. Topologically, residues 20–554 (QNPVWIGGSG…LGTDGISKGS (535 aa)) are extracellular. 10 N-linked (GlcNAc...) asparagine glycosylation sites follow: Asn75, Asn161, Asn215, Asn276, Asn277, Asn307, Asn324, Asn453, Asn477, and Asn527. The helical transmembrane segment at 555–575 (LAGISVSMVALACFVSLGVWW) threads the bilayer. Residues 576–607 (KTSKKNDQRNDSQVLTNFSQNKSDDIDVERKL) are Cytoplasmic-facing.

Forms a complex with psiF/dicA.

The protein resides in the membrane. The protein localises to the secreted. In terms of biological role, component of a complex that acts as a quorum sensing protein regulating discoidin gene expression during growth and development. Its function in the complex is unclear as it has no ability to induce discoidin during growth and development by itself. The protein is Discoidin-inducing complex subunit B (dicB) of Dictyostelium discoideum (Social amoeba).